The chain runs to 426 residues: Enolase (426 aa).

Gln163 is a binding site for (2R)-2-phosphoglycerate. The Proton donor role is filled by Glu205. Mg(2+) contacts are provided by Asp242, Glu285, and Asp312. (2R)-2-phosphoglycerate is bound by residues Lys337, Arg366, Ser367, and Lys388. The active-site Proton acceptor is the Lys337.

This sequence belongs to the enolase family. Mg(2+) is required as a cofactor.

The protein resides in the cytoplasm. The protein localises to the secreted. It localises to the cell surface. The catalysed reaction is (2R)-2-phosphoglycerate = phosphoenolpyruvate + H2O. The protein operates within carbohydrate degradation; glycolysis; pyruvate from D-glyceraldehyde 3-phosphate: step 4/5. Its function is as follows. Catalyzes the reversible conversion of 2-phosphoglycerate (2-PG) into phosphoenolpyruvate (PEP). It is essential for the degradation of carbohydrates via glycolysis. The chain is Enolase from Phenylobacterium zucineum (strain HLK1).